Here is a 239-residue protein sequence, read N- to C-terminus: MTKESIPKELLKLITGEEIMMFQELRIRIQELNYKTNLTRLIEGDDYWISQVYDSLWTFKENSKKIFDNKKFIDIGSGCGFPGFAYAITHPNSEIYLVDSSKKKTDSLKEIIKRMNFKNNIFVINDRIENVGRQSSFKKSFNIATARAVSNPSTVAEYILPMLEQNGLGILYCGKWRNEDNKNLENTLNVLEGKIMEIKSKSLPKEKGIRNVIFIKPKASCPDIFPRSIGKAEKYPLKG.

Residues Gly-76, Phe-81, 99–101 (DSS), 128–129 (IE), and Arg-147 each bind S-adenosyl-L-methionine.

It belongs to the methyltransferase superfamily. RNA methyltransferase RsmG family.

It localises to the cytoplasm. Specifically methylates the N7 position of a guanine in 16S rRNA. The polypeptide is Ribosomal RNA small subunit methyltransferase G (Prochlorococcus marinus (strain MIT 9515)).